The chain runs to 193 residues: Fe/S biogenesis protein NfuA (193 aa).

[4Fe-4S] cluster-binding residues include Cys-151 and Cys-154.

It belongs to the NfuA family. Homodimer. Requires [4Fe-4S] cluster as cofactor.

Its function is as follows. Involved in iron-sulfur cluster biogenesis. Binds a 4Fe-4S cluster, can transfer this cluster to apoproteins, and thereby intervenes in the maturation of Fe/S proteins. Could also act as a scaffold/chaperone for damaged Fe/S proteins. This chain is Fe/S biogenesis protein NfuA, found in Buchnera aphidicola subsp. Cinara cedri (strain Cc).